We begin with the raw amino-acid sequence, 506 residues long: Dipeptide and tripeptide permease A (506 aa).

Residues 1–36 lie on the Cytoplasmic side of the membrane; it reads MSTANNNSEHPESVSLNAFKQPKAFYLIFSIELWER. Residues 37–57 form a helical membrane-spanning segment; it reads FGYYGLQGIMAVYLVKMLGLS. The Periplasmic segment spans residues 58-61; the sequence is EADS. Residues 62-82 form a helical membrane-spanning segment; sequence ITLFSSFSALVYGFVAIGGWL. The Cytoplasmic segment spans residues 83–91; it reads GDKVLGSKR. Transmembrane regions (helical) follow at residues 92–112 and 113–133; these read VIVLGALVLAVGYAMVAYSGH and EIFWVYLGMATIAVGSGLFKA. Topologically, residues 134 to 155 are cytoplasmic; the sequence is NPSSLLSTCYEKDDPRLDGAFT. The helical transmembrane segment at 156–176 threads the bilayer; sequence MYYMSVNIGSFLSMLATPWLA. At 177-180 the chain is on the periplasmic side; the sequence is AKYG. Residues 181-201 traverse the membrane as a helical segment; it reads WSVAFSLSVVGMLITLVNFMV. At 202-222 the chain is on the cytoplasmic side; it reads CHKWVKQHGSKPDFKPLQVKK. Residues 223-243 form a helical membrane-spanning segment; sequence LLMVLVGVVALVALSSWLLHN. The Periplasmic segment spans residues 244 to 248; it reads QIIAR. Residues 249–269 traverse the membrane as a helical segment; it reads WALAIVSIGIVIVFAKETFAL. The Cytoplasmic segment spans residues 270-276; sequence HGAARRK. The helical transmembrane segment at 277–297 threads the bilayer; the sequence is MIVAFLLMLEAVVFFVLYSQM. The Periplasmic portion of the chain corresponds to 298 to 322; that stretch reads PTSLNFFAIHNVEHNILGLAFEPEQ. The chain crosses the membrane as a helical span at residues 323–343; sequence YQALNPFWIMLASPILAALYN. Residues 344–354 lie on the Cytoplasmic side of the membrane; sequence KMGDRLPMPHK. The chain crosses the membrane as a helical span at residues 355–375; sequence FAFGMILCSGAFLVLPWGASF. Topologically, residues 376 to 385 are periplasmic; the sequence is ANEQGIVSVN. The chain crosses the membrane as a helical span at residues 386 to 406; that stretch reads WLILSYALQSIGELMISGLGL. Residues 407–416 lie on the Cytoplasmic side of the membrane; it reads AMVAQLVPQR. The helical transmembrane segment at 417–437 threads the bilayer; the sequence is LMGFIMGSWFLTTAAAALIAG. Over 438–461 the chain is Periplasmic; that stretch reads KVAGLTAVPGDVNDAHASLAIYSH. Residues 462–482 traverse the membrane as a helical segment; the sequence is VFMQIGIATAVIAILMMLTAP. At 483-506 the chain is on the cytoplasmic side; the sequence is KLHRMTLDTAEDTEKKAQAAAITN.

This sequence belongs to the major facilitator superfamily. Proton-dependent oligopeptide transporter (POT/PTR) (TC 2.A.17) family. DtpA subfamily.

It localises to the cell inner membrane. In terms of biological role, proton-dependent permease that transports di- and tripeptides. The protein is Dipeptide and tripeptide permease A of Serratia proteamaculans (strain 568).